The sequence spans 199 residues: Holliday junction branch migration complex subunit RuvA (199 aa).

Residues 1–63 form a domain I region; it reads MYEYLTGLVT…EDNISLFGFT (63 aa). A domain II region spans residues 64–142; sequence DQNEKNLFMQ…NESSSSLFAT (79 aa). The segment at 143–149 is flexible linker; it reads TQLTVDA. Residues 150–199 form a domain III region; it reads TVNRELKDALEALAALGYKERDIKKVQKALMKEEQMATDEYLRQALRLLN.

Belongs to the RuvA family. As to quaternary structure, homotetramer. Forms an RuvA(8)-RuvB(12)-Holliday junction (HJ) complex. HJ DNA is sandwiched between 2 RuvA tetramers; dsDNA enters through RuvA and exits via RuvB. An RuvB hexamer assembles on each DNA strand where it exits the tetramer. Each RuvB hexamer is contacted by two RuvA subunits (via domain III) on 2 adjacent RuvB subunits; this complex drives branch migration. In the full resolvosome a probable DNA-RuvA(4)-RuvB(12)-RuvC(2) complex forms which resolves the HJ.

It is found in the cytoplasm. Its function is as follows. The RuvA-RuvB-RuvC complex processes Holliday junction (HJ) DNA during genetic recombination and DNA repair, while the RuvA-RuvB complex plays an important role in the rescue of blocked DNA replication forks via replication fork reversal (RFR). RuvA specifically binds to HJ cruciform DNA, conferring on it an open structure. The RuvB hexamer acts as an ATP-dependent pump, pulling dsDNA into and through the RuvAB complex. HJ branch migration allows RuvC to scan DNA until it finds its consensus sequence, where it cleaves and resolves the cruciform DNA. This Limosilactobacillus reuteri subsp. reuteri (strain JCM 1112) (Lactobacillus reuteri) protein is Holliday junction branch migration complex subunit RuvA.